Reading from the N-terminus, the 349-residue chain is tRNA pseudouridine synthase D (349 aa).

Phenylalanine 27 lines the substrate pocket. Catalysis depends on aspartate 80, which acts as the Nucleophile. Residue asparagine 129 participates in substrate binding. The 149-residue stretch at 155-303 folds into the TRUD domain; that stretch reads GVPNYFGAQR…VEAARRAMLL (149 aa). Phenylalanine 329 contacts substrate.

The protein belongs to the pseudouridine synthase TruD family.

The enzyme catalyses uridine(13) in tRNA = pseudouridine(13) in tRNA. In terms of biological role, responsible for synthesis of pseudouridine from uracil-13 in transfer RNAs. The sequence is that of tRNA pseudouridine synthase D from Shigella boydii serotype 18 (strain CDC 3083-94 / BS512).